Here is a 150-residue protein sequence, read N- to C-terminus: Lipoprotein signal peptidase (150 aa).

2 helical membrane passes run 59-79 (VFVG…RYLP) and 84-101 (LLRL…GNLI). Residues aspartate 111 and aspartate 125 contribute to the active site. The chain crosses the membrane as a helical span at residues 117 to 137 (IWPVFNLADMAIVFGVIILCW).

This sequence belongs to the peptidase A8 family.

It localises to the cell membrane. It catalyses the reaction Release of signal peptides from bacterial membrane prolipoproteins. Hydrolyzes -Xaa-Yaa-Zaa-|-(S,diacylglyceryl)Cys-, in which Xaa is hydrophobic (preferably Leu), and Yaa (Ala or Ser) and Zaa (Gly or Ala) have small, neutral side chains.. It participates in protein modification; lipoprotein biosynthesis (signal peptide cleavage). This protein specifically catalyzes the removal of signal peptides from prolipoproteins. This is Lipoprotein signal peptidase from Moorella thermoacetica (strain ATCC 39073 / JCM 9320).